Consider the following 563-residue polypeptide: Mitochondrial distribution and morphology protein 34 (563 aa).

The SMP-LTD domain occupies 1-195 (MAFNFNWSPL…LPAIIHRLSL (195 aa)). Disordered regions lie at residues 298–499 (ERGD…PHTP) and 531–563 (ARRQ…PKAL). 2 stretches are compositionally biased toward polar residues: residues 303–332 (AGTT…FSNR) and 346–357 (SLVNMNSATTGL). The span at 365 to 383 (SRSHPTRKKKNRVVNLRKP) shows a compositional bias: basic residues. Residues 386–407 (TESSESGESETASTTAVSEPTV) are compositionally biased toward low complexity. 2 stretches are compositionally biased toward polar residues: residues 458–471 (PSLT…INTQ) and 478–488 (YNQSASTSYTP). The segment covering 531–540 (ARRQHDDKTA) has biased composition (basic and acidic residues).

The protein belongs to the MDM34 family. In terms of assembly, component of the ER-mitochondria encounter structure (ERMES) or MDM complex, composed of MMM1, MDM10, MDM12 and MDM34.

Its subcellular location is the mitochondrion outer membrane. Functionally, component of the ERMES/MDM complex, which serves as a molecular tether to connect the endoplasmic reticulum (ER) and mitochondria. Components of this complex are involved in the control of mitochondrial shape and protein biogenesis, and function in nonvesicular lipid trafficking between the ER and mitochondria. MDM34 is required for the interaction of the ER-resident membrane protein MMM1 and the outer mitochondrial membrane-resident beta-barrel protein MDM10. This is Mitochondrial distribution and morphology protein 34 from Botryotinia fuckeliana (strain B05.10) (Noble rot fungus).